Reading from the N-terminus, the 119-residue chain is Hemerythrin-like protein (119 aa).

Fe cation contacts are provided by H26, H56, E60, H75, H79, H107, and D112.

Belongs to the hemerythrin family.

Its function is as follows. Oxygen-binding protein. The oxygen-binding site contains two iron atoms. This is Hemerythrin-like protein (nfa1) from Naegleria fowleri (Brain eating amoeba).